We begin with the raw amino-acid sequence, 342 residues long: Large ribosomal subunit protein uL3 (342 aa).

Belongs to the universal ribosomal protein uL3 family. As to quaternary structure, part of the 50S ribosomal subunit. Forms a cluster with proteins L14 and L24e.

Its function is as follows. One of the primary rRNA binding proteins, it binds directly near the 3'-end of the 23S rRNA, where it nucleates assembly of the 50S subunit. The polypeptide is Large ribosomal subunit protein uL3 (Pyrobaculum islandicum (strain DSM 4184 / JCM 9189 / GEO3)).